A 215-amino-acid polypeptide reads, in one-letter code: LysM and putative peptidoglycan-binding domain-containing protein 1 (215 aa).

Residues 37–81 (LEHQVQPGDTLQGLALRYGVSMEQIKRANRLYTNDSIFLKKSLYI) form the LysM domain. 2 stretches are compositionally biased toward polar residues: residues 86–103 (GQSD…SETE) and 173–189 (GNRT…QQRS). Disordered regions lie at residues 86–133 (GQSD…PVDF) and 148–203 (AVKK…TRAS).

This is LysM and putative peptidoglycan-binding domain-containing protein 1 (lysmd1) from Xenopus laevis (African clawed frog).